Consider the following 571-residue polypeptide: Alpha-1D adrenergic receptor (571 aa).

Over 1–94 (MTFRDLLSVN…AVGGLVVSAQ (94 aa)) the chain is Extracellular. The disordered stretch occupies residues 13–75 (GSRSDGSAGG…SSAGEPGAAG (63 aa)). Gly residues predominate over residues 19–34 (SAGGASAGGSGGGSGG). The span at 35 to 47 (AAASEGRAVDGVP) shows a compositional bias: low complexity. Residues 48 to 57 (GTAGSGGVVG) show a composition bias toward gly residues. N-linked (GlcNAc...) asparagine glycans are attached at residues N64 and N81. A helical membrane pass occupies residues 95–120 (GVGVGVFLAAFILMAVAGNLLVILSV). Residues 121–132 (ACNRHLQTVTNY) are Cytoplasmic-facing. The helical transmembrane segment at 133-158 (FIVNLAVADLLLSATVLPFSATMEVL) threads the bilayer. At 159-168 (GFWAFGRAFC) the chain is on the extracellular side. The helical transmembrane segment at 169 to 191 (DVWAAVDVLCCTASILSLCTISV) threads the bilayer. At 192 to 212 (DRYVGVRHSLKYPSIMTERKA) the chain is on the cytoplasmic side. The chain crosses the membrane as a helical span at residues 213–237 (AAILALLWAVAIVVSVGPLLGWKEP). The Extracellular portion of the chain corresponds to 238–250 (VPPDERFCGITEE). The helical transmembrane segment at 251-274 (AGYAVFSSLCSFYLPMAVIVVMYC) threads the bilayer. Residues 275–348 (RVYVVARSTT…KFSREKKAAK (74 aa)) are Cytoplasmic-facing. The chain crosses the membrane as a helical span at residues 349 to 373 (TLAIVVGVFVLCWFPFFFVLPLGSL). Residues 374–380 (FPQLKPS) lie on the Extracellular side of the membrane. The helical transmembrane segment at 381–405 (EGVFKVIFWLGYFNSCVNPLIYPCS) threads the bilayer. Residues 406 to 571 (SREFKRAFLR…DYSHLRETDI (166 aa)) lie on the Cytoplasmic side of the membrane. A lipid anchor (S-palmitoyl cysteine) is attached at C419. A disordered region spans residues 465–487 (LPAPEATDTPSAPEAQAPVVGRR).

It belongs to the G-protein coupled receptor 1 family. Adrenergic receptor subfamily. ADRA1D sub-subfamily. Interacts with FLNA (via filamin repeat 21); increases PKA-mediated phosphorylation of FLNA. In terms of processing, palmitoylated. Palmitoylation by ZDHHC21 may increase the expression of the receptor and regulate downstream signaling.

Its subcellular location is the cell membrane. Its function is as follows. This alpha-adrenergic receptor mediates its effect through the influx of extracellular calcium. The chain is Alpha-1D adrenergic receptor (ADRA1D) from Sus scrofa (Pig).